The chain runs to 166 residues: Zinc finger CCHC domain-containing protein 13 (166 aa).

A CCHC-type 1; degenerate zinc finger spans residues 4-21; it reads KDFFACGHSGHWARGCPR. A CCHC-type 2; degenerate zinc finger spans residues 45 to 62; it reads YTCYCCGESGRNAKNCVL. CCHC-type zinc fingers lie at residues 65-82, 89-106, 110-127, and 128-145; these read NICY…DCKD, QHCY…DCDR, QKCY…DCAQ, and VKCY…NCSK.

The sequence is that of Zinc finger CCHC domain-containing protein 13 (ZCCHC13) from Homo sapiens (Human).